We begin with the raw amino-acid sequence, 257 residues long: Putative transcription factor R430 (257 aa).

Disordered stretches follow at residues 1–35 (MEKF…DNNS) and 58–77 (SLKS…PNKS). Low complexity predominate over residues 7-25 (TDNTTDNTTDNTTDNTTDN). Basic and acidic residues predominate over residues 26 to 35 (TTDKLTDNNS).

This sequence belongs to the nucleo-cytoplasmic large DNA viruses (NCLDVs) VLTF-3 family.

Its function is as follows. Putative transcription factor. This is Putative transcription factor R430 from Acanthamoeba polyphaga (Amoeba).